The chain runs to 398 residues: 8-amino-7-oxononanoate synthase (398 aa).

R23 is a substrate binding site. 110–111 (GY) lines the pyridoxal 5'-phosphate pocket. Substrate is bound at residue H135. Pyridoxal 5'-phosphate contacts are provided by S181, H209, and T238. Position 241 is an N6-(pyridoxal phosphate)lysine (K241). A substrate-binding site is contributed by T355.

This sequence belongs to the class-II pyridoxal-phosphate-dependent aminotransferase family. BioF subfamily. Homodimer. The cofactor is pyridoxal 5'-phosphate.

It catalyses the reaction 6-carboxyhexanoyl-[ACP] + L-alanine + H(+) = (8S)-8-amino-7-oxononanoate + holo-[ACP] + CO2. Its pathway is cofactor biosynthesis; biotin biosynthesis. Its function is as follows. Catalyzes the decarboxylative condensation of pimeloyl-[acyl-carrier protein] and L-alanine to produce 8-amino-7-oxononanoate (AON), [acyl-carrier protein], and carbon dioxide. This chain is 8-amino-7-oxononanoate synthase, found in Cellvibrio japonicus (strain Ueda107) (Pseudomonas fluorescens subsp. cellulosa).